The sequence spans 333 residues: Holliday junction branch migration complex subunit RuvB (333 aa).

Positions Met1–Tyr181 are large ATPase domain (RuvB-L). ATP-binding positions include Leu20, Arg21, Gly62, Lys65, Thr66, Thr67, Glu128–Phe130, Arg171, Tyr181, and Arg218. Thr66 is a Mg(2+) binding site. Positions Gln182–Asp252 are small ATPAse domain (RuvB-S). The head domain (RuvB-H) stretch occupies residues Ala255–Glu333. Positions 291, 310, and 315 each coordinate DNA.

It belongs to the RuvB family. Homohexamer. Forms an RuvA(8)-RuvB(12)-Holliday junction (HJ) complex. HJ DNA is sandwiched between 2 RuvA tetramers; dsDNA enters through RuvA and exits via RuvB. An RuvB hexamer assembles on each DNA strand where it exits the tetramer. Each RuvB hexamer is contacted by two RuvA subunits (via domain III) on 2 adjacent RuvB subunits; this complex drives branch migration. In the full resolvosome a probable DNA-RuvA(4)-RuvB(12)-RuvC(2) complex forms which resolves the HJ.

It is found in the cytoplasm. It catalyses the reaction ATP + H2O = ADP + phosphate + H(+). Its function is as follows. The RuvA-RuvB-RuvC complex processes Holliday junction (HJ) DNA during genetic recombination and DNA repair, while the RuvA-RuvB complex plays an important role in the rescue of blocked DNA replication forks via replication fork reversal (RFR). RuvA specifically binds to HJ cruciform DNA, conferring on it an open structure. The RuvB hexamer acts as an ATP-dependent pump, pulling dsDNA into and through the RuvAB complex. RuvB forms 2 homohexamers on either side of HJ DNA bound by 1 or 2 RuvA tetramers; 4 subunits per hexamer contact DNA at a time. Coordinated motions by a converter formed by DNA-disengaged RuvB subunits stimulates ATP hydrolysis and nucleotide exchange. Immobilization of the converter enables RuvB to convert the ATP-contained energy into a lever motion, pulling 2 nucleotides of DNA out of the RuvA tetramer per ATP hydrolyzed, thus driving DNA branch migration. The RuvB motors rotate together with the DNA substrate, which together with the progressing nucleotide cycle form the mechanistic basis for DNA recombination by continuous HJ branch migration. Branch migration allows RuvC to scan DNA until it finds its consensus sequence, where it cleaves and resolves cruciform DNA. This Lactococcus lactis subsp. cremoris (strain SK11) protein is Holliday junction branch migration complex subunit RuvB.